The primary structure comprises 129 residues: Ubiquinol-cytochrome-c reductase complex assembly factor 2 (129 aa).

A mitochondrion-targeting transit peptide spans 1–13 (MSATRYRRFLKLC).

The protein resides in the mitochondrion matrix. The protein localises to the mitochondrion nucleoid. Its subcellular location is the mitochondrion. In terms of biological role, required for the assembly of the ubiquinol-cytochrome c reductase complex (mitochondrial respiratory chain complex III or cytochrome b-c1 complex). May play a role in the modulation of respiratory chain activities such as oxygen consumption and ATP production. May be involved in cytochrome b translation and/or stability. In Danio rerio (Zebrafish), this protein is Ubiquinol-cytochrome-c reductase complex assembly factor 2 (uqcc2).